Reading from the N-terminus, the 157-residue chain is Endoribonuclease YbeY (157 aa).

Residues H123, H127, and H133 each contribute to the Zn(2+) site.

Belongs to the endoribonuclease YbeY family. Zn(2+) is required as a cofactor.

The protein resides in the cytoplasm. In terms of biological role, single strand-specific metallo-endoribonuclease involved in late-stage 70S ribosome quality control and in maturation of the 3' terminus of the 16S rRNA. The chain is Endoribonuclease YbeY from Limosilactobacillus fermentum (strain NBRC 3956 / LMG 18251) (Lactobacillus fermentum).